A 155-amino-acid chain; its full sequence is Small ribosomal subunit protein uS7cz/uS7cy (155 aa).

Belongs to the universal ribosomal protein uS7 family. As to quaternary structure, part of the 30S ribosomal subunit.

The protein resides in the plastid. Its subcellular location is the chloroplast. One of the primary rRNA binding proteins, it binds directly to 16S rRNA where it nucleates assembly of the head domain of the 30S subunit. The chain is Small ribosomal subunit protein uS7cz/uS7cy (rps7-A) from Piper cenocladum (Ant piper).